We begin with the raw amino-acid sequence, 39 residues long: Metallocarboxypeptidase inhibitor (39 aa).

A Pyrrolidone carboxylic acid modification is found at glutamine 1. Disulfide bonds link cysteine 8-cysteine 24, cysteine 12-cysteine 27, and cysteine 18-cysteine 34.

As to expression, highly concentrated in tubers. Closely related but distinct forms of MCPI are present in leaves, stems and buds.

May play a defensive role against insect attacks. Inhibits A.aegypti carboxypeptidase CPB1. The protein is Metallocarboxypeptidase inhibitor of Solanum tuberosum (Potato).